A 223-amino-acid polypeptide reads, in one-letter code: DNA mismatch repair protein MutH (223 aa).

Belongs to the MutH family.

The protein localises to the cytoplasm. Its function is as follows. Sequence-specific endonuclease that cleaves unmethylated GATC sequences. It is involved in DNA mismatch repair. This is DNA mismatch repair protein MutH from Shewanella sp. (strain ANA-3).